The sequence spans 339 residues: 4-amino-5-hydroxymethyl-2-methylpyrimidine phosphate synthase (339 aa).

At Lys-62 the chain carries N6-(pyridoxal phosphate)lysine. His-66 is an active-site residue. 115–118 (GEFG) is a binding site for pyridoxal 5'-phosphate. A CCCFC; essential for catalytic activity, may be the site of iron coordination motif is present at residues 195–199 (CCCFC).

Belongs to the NMT1/THI5 family. Homodimer. The cofactor is Fe(3+).

The catalysed reaction is N(6)-(pyridoxal phosphate)-L-lysyl-[4-amino-5-hydroxymethyl-2-methylpyrimidine phosphate synthase] + L-histidyl-[4-amino-5-hydroxymethyl-2-methylpyrimidine phosphate synthase] + 2 Fe(3+) + 4 H2O = L-lysyl-[4-amino-5-hydroxymethyl-2-methylpyrimidine phosphate synthase] + (2S)-2-amino-5-hydroxy-4-oxopentanoyl-[4-amino-5-hydroxymethyl-2-methylpyrimidine phosphate synthase] + 4-amino-2-methyl-5-(phosphooxymethyl)pyrimidine + 3-oxopropanoate + 2 Fe(2+) + 2 H(+). Its pathway is cofactor biosynthesis; thiamine diphosphate biosynthesis. Responsible for the formation of the pyrimidine heterocycle in the thiamine biosynthesis pathway. Catalyzes the formation of hydroxymethylpyrimidine phosphate (HMP-P) from histidine and pyridoxal phosphate (PLP). The protein uses PLP and the active site histidine to form HMP-P, generating an inactive enzyme. The enzyme can only undergo a single turnover, which suggests it is a suicide enzyme. This chain is 4-amino-5-hydroxymethyl-2-methylpyrimidine phosphate synthase, found in Candida albicans (strain WO-1) (Yeast).